The chain runs to 465 residues: UDP-N-acetylmuramate--L-alanine ligase (465 aa).

115-121 (GAHGKTT) is an ATP binding site.

It belongs to the MurCDEF family.

It localises to the cytoplasm. It carries out the reaction UDP-N-acetyl-alpha-D-muramate + L-alanine + ATP = UDP-N-acetyl-alpha-D-muramoyl-L-alanine + ADP + phosphate + H(+). The protein operates within cell wall biogenesis; peptidoglycan biosynthesis. Cell wall formation. This chain is UDP-N-acetylmuramate--L-alanine ligase, found in Coxiella burnetii (strain CbuG_Q212) (Coxiella burnetii (strain Q212)).